The chain runs to 139 residues: MATNVGPQIRSGELVFGVAHIFASFNDTFVHITDLTGKETIVRVTGGMKVKTDRDESSPYAAMLAAQDAAAKCKEVGITALHIKIRATGGTATKTPGPGAQAALRALARAGMRIGRIEDVTPIPTDSTRRKGGRRGRRL.

The segment at 119–139 (DVTPIPTDSTRRKGGRRGRRL) is disordered. A compositionally biased stretch (basic residues) spans 130–139 (RKGGRRGRRL).

It belongs to the universal ribosomal protein uS11 family. In terms of assembly, component of the small ribosomal subunit (SSU). Mature yeast ribosomes consist of a small (40S) and a large (60S) subunit. The 40S small subunit contains 1 molecule of ribosomal RNA (18S rRNA) and at least 33 different proteins. The large 60S subunit contains 3 rRNA molecules (25S, 5.8S and 5S rRNA) and at least 46 different proteins. uS11 interacts with eS1 forming part of the mRNA exit tunnel. uS11 interacts with snoRNA U3. uS11 interacts with MPP10. Component of the ribosomal small subunit (SSU) processome composed of at least 40 protein subunits and snoRNA U3.

It is found in the cytoplasm. The protein resides in the nucleus. The protein localises to the nucleolus. Component of the ribosome, a large ribonucleoprotein complex responsible for the synthesis of proteins in the cell. The small ribosomal subunit (SSU) binds messenger RNAs (mRNAs) and translates the encoded message by selecting cognate aminoacyl-transfer RNA (tRNA) molecules. The large subunit (LSU) contains the ribosomal catalytic site termed the peptidyl transferase center (PTC), which catalyzes the formation of peptide bonds, thereby polymerizing the amino acids delivered by tRNAs into a polypeptide chain. The nascent polypeptides leave the ribosome through a tunnel in the LSU and interact with protein factors that function in enzymatic processing, targeting, and the membrane insertion of nascent chains at the exit of the ribosomal tunnel. uS11 is involved in nucleolar processing of pre-18S ribosomal RNA and ribosome assembly. In Schizosaccharomyces pombe (strain 972 / ATCC 24843) (Fission yeast), this protein is Small ribosomal subunit protein uS11A (rps1401).